We begin with the raw amino-acid sequence, 120 residues long: Large ribosomal subunit protein bL20 (120 aa).

Belongs to the bacterial ribosomal protein bL20 family.

Functionally, binds directly to 23S ribosomal RNA and is necessary for the in vitro assembly process of the 50S ribosomal subunit. It is not involved in the protein synthesizing functions of that subunit. The protein is Large ribosomal subunit protein bL20 of Xanthobacter autotrophicus (strain ATCC BAA-1158 / Py2).